Reading from the N-terminus, the 804-residue chain is Leucine--tRNA ligase (804 aa).

The 'HIGH' region motif lies at 40–51; it reads PYPSGAGLHVGH. A 'KMSKS' region motif is present at residues 576 to 580; it reads KMSKS. Lys-579 serves as a coordination point for ATP.

It belongs to the class-I aminoacyl-tRNA synthetase family.

It localises to the cytoplasm. The enzyme catalyses tRNA(Leu) + L-leucine + ATP = L-leucyl-tRNA(Leu) + AMP + diphosphate. In Bacillus subtilis (strain 168), this protein is Leucine--tRNA ligase.